The following is a 176-amino-acid chain: Conidiation-specific protein 8 (176 aa).

2 disordered regions span residues 1 to 66 (MDDT…SKLI) and 79 to 162 (AASE…PQGF). The segment covering 79–99 (AASEAFRSERSASTSSTTSET) has biased composition (low complexity).

The sequence is that of Conidiation-specific protein 8 (con-8) from Neurospora crassa (strain ATCC 24698 / 74-OR23-1A / CBS 708.71 / DSM 1257 / FGSC 987).